A 209-amino-acid chain; its full sequence is Octanoyltransferase (209 aa).

The region spanning 29 to 209 (EHTPDELWVV…CHQLQPEIDS (181 aa)) is the BPL/LPL catalytic domain. Residues 71 to 78 (RGGQVTYH), 138 to 140 (SLG), and 151 to 153 (GLA) each bind substrate. Cysteine 169 functions as the Acyl-thioester intermediate in the catalytic mechanism.

It belongs to the LipB family.

It is found in the cytoplasm. It carries out the reaction octanoyl-[ACP] + L-lysyl-[protein] = N(6)-octanoyl-L-lysyl-[protein] + holo-[ACP] + H(+). It functions in the pathway protein modification; protein lipoylation via endogenous pathway; protein N(6)-(lipoyl)lysine from octanoyl-[acyl-carrier-protein]: step 1/2. Catalyzes the transfer of endogenously produced octanoic acid from octanoyl-acyl-carrier-protein onto the lipoyl domains of lipoate-dependent enzymes. Lipoyl-ACP can also act as a substrate although octanoyl-ACP is likely to be the physiological substrate. This is Octanoyltransferase from Hydrogenovibrio crunogenus (strain DSM 25203 / XCL-2) (Thiomicrospira crunogena).